The following is a 379-amino-acid chain: Homoserine O-succinyltransferase (379 aa).

The 310-residue stretch at 51–360 folds into the AB hydrolase-1 domain; the sequence is NAVLICHALS…DAPQGHDAFL (310 aa). Residue serine 157 is the Nucleophile of the active site. Position 227 (arginine 227) interacts with substrate. Residues aspartate 323 and histidine 356 contribute to the active site. A substrate-binding site is contributed by aspartate 357.

This sequence belongs to the AB hydrolase superfamily. MetX family. As to quaternary structure, homodimer.

The protein resides in the cytoplasm. The enzyme catalyses L-homoserine + succinyl-CoA = O-succinyl-L-homoserine + CoA. Its pathway is amino-acid biosynthesis; L-methionine biosynthesis via de novo pathway; O-succinyl-L-homoserine from L-homoserine: step 1/1. Functionally, transfers a succinyl group from succinyl-CoA to L-homoserine, forming succinyl-L-homoserine. This Ectopseudomonas mendocina (strain ymp) (Pseudomonas mendocina) protein is Homoserine O-succinyltransferase.